Here is a 236-residue protein sequence, read N- to C-terminus: Pyridoxine 5'-phosphate synthase (236 aa).

Asn7 provides a ligand contact to 3-amino-2-oxopropyl phosphate. 9–10 contacts 1-deoxy-D-xylulose 5-phosphate; it reads DH. Arg18 contributes to the 3-amino-2-oxopropyl phosphate binding site. The active-site Proton acceptor is the His43. Positions 45 and 50 each coordinate 1-deoxy-D-xylulose 5-phosphate. The active-site Proton acceptor is the Glu69. Thr99 contributes to the 1-deoxy-D-xylulose 5-phosphate binding site. His190 acts as the Proton donor in catalysis. Residues Gly191 and 212-213 contribute to the 3-amino-2-oxopropyl phosphate site; that span reads GH.

Belongs to the PNP synthase family. In terms of assembly, homooctamer; tetramer of dimers.

The protein localises to the cytoplasm. The catalysed reaction is 3-amino-2-oxopropyl phosphate + 1-deoxy-D-xylulose 5-phosphate = pyridoxine 5'-phosphate + phosphate + 2 H2O + H(+). It functions in the pathway cofactor biosynthesis; pyridoxine 5'-phosphate biosynthesis; pyridoxine 5'-phosphate from D-erythrose 4-phosphate: step 5/5. Functionally, catalyzes the complicated ring closure reaction between the two acyclic compounds 1-deoxy-D-xylulose-5-phosphate (DXP) and 3-amino-2-oxopropyl phosphate (1-amino-acetone-3-phosphate or AAP) to form pyridoxine 5'-phosphate (PNP) and inorganic phosphate. In Desulfosudis oleivorans (strain DSM 6200 / JCM 39069 / Hxd3) (Desulfococcus oleovorans), this protein is Pyridoxine 5'-phosphate synthase.